Consider the following 805-residue polypeptide: DNA gyrase subunit B (805 aa).

Residues 435 to 550 (SEIFIVEGDS…RGYIYIAQPP (116 aa)) enclose the Toprim domain. Residues Glu441, Asp515, and Asp517 each coordinate Mg(2+).

This sequence belongs to the type II topoisomerase GyrB family. In terms of assembly, heterotetramer, composed of two GyrA and two GyrB chains. In the heterotetramer, GyrA contains the active site tyrosine that forms a transient covalent intermediate with DNA, while GyrB binds cofactors and catalyzes ATP hydrolysis. Requires Mg(2+) as cofactor. Mn(2+) serves as cofactor. Ca(2+) is required as a cofactor.

The protein localises to the cytoplasm. It carries out the reaction ATP-dependent breakage, passage and rejoining of double-stranded DNA.. A type II topoisomerase that negatively supercoils closed circular double-stranded (ds) DNA in an ATP-dependent manner to modulate DNA topology and maintain chromosomes in an underwound state. Negative supercoiling favors strand separation, and DNA replication, transcription, recombination and repair, all of which involve strand separation. Also able to catalyze the interconversion of other topological isomers of dsDNA rings, including catenanes and knotted rings. Type II topoisomerases break and join 2 DNA strands simultaneously in an ATP-dependent manner. This chain is DNA gyrase subunit B, found in Caulobacter vibrioides (strain ATCC 19089 / CIP 103742 / CB 15) (Caulobacter crescentus).